A 149-amino-acid polypeptide reads, in one-letter code: Proline-rich acidic protein 1 (149 aa).

The first 20 residues, 1–20 (MKRFLLATCLVAALLWEAGA), serve as a signal peptide directing secretion. 2 disordered regions span residues 51 to 79 (EPLE…KRPD) and 97 to 122 (LQGP…EVPQ). Residues 66–79 (PKQKPAAAEEKRPD) are compositionally biased toward basic and acidic residues.

Interacts with MTTP. Interacts with MAD1L1. Predominantly expressed in the intestinal epithelial cells than in the liver (at protein level). Abundantly expressed in the uterus during late pregnancy by uterus epithelial cells. After birth expression rapidly decreases and is no longer found in the uterus by the third day. Also highly expressed in the small intestine where it shows a proximal-distal graded expression.

The protein resides in the secreted. The protein localises to the endoplasmic reticulum. Functionally, lipid-binding protein which promotes lipid absorption by facilitating MTTP-mediated lipid transfer (mainly triglycerides and phospholipids) and MTTP-mediated apoB lipoprotein assembly and secretion. Protects the gastrointestinal epithelium from irradiation-induced apoptosis. May play an important role in maintaining normal growth homeostasis in epithelial cells. Involved in p53/TP53-dependent cell survival after DNA damage. This chain is Proline-rich acidic protein 1 (Prap1), found in Mus musculus (Mouse).